Here is a 292-residue protein sequence, read N- to C-terminus: uncharacterized protein (292 aa).

The HTH lysR-type domain occupies 1–59 (MTITQLKVFVKIAETGSFTKAGQALNMTQPAVSHAISAIEAELDVKLIIRDRRNGLMLT). Positions 18–37 (FTKAGQALNMTQPAVSHAIS) form a DNA-binding region, H-T-H motif.

Belongs to the LysR transcriptional regulatory family.

This is an uncharacterized protein from Bacillus subtilis (strain 168).